A 21-amino-acid chain; its full sequence is Large ribosomal subunit protein uL10 (21 aa).

The protein belongs to the universal ribosomal protein uL10 family. In terms of assembly, part of the ribosomal stalk of the 50S ribosomal subunit. The N-terminus interacts with L11 and the large rRNA to form the base of the stalk. The C-terminus forms an elongated spine to which L12 dimers bind in a sequential fashion forming a multimeric L10(L12)X complex.

In terms of biological role, forms part of the ribosomal stalk, playing a central role in the interaction of the ribosome with GTP-bound translation factors. This is Large ribosomal subunit protein uL10 (rplJ) from Bacillus cereus.